A 249-amino-acid chain; its full sequence is MVLCRDFLTWCNETLQTALFKDYAPNGLQVEGREYIGKIVTSVTASRAAIDFAVEQKADLLLVHHGMFWKNELPTVTGWKKERIAALLRHDINMAGYHLPLDAHPTLGNNAQLADRLGFATEKRFGEQNLLNSGSLKQAKTLGALAAHIETVLQRKPVVIGNPEREIRRVAWCSGGAQGFFQTAIDEGVDLYLTGEISEAQYHLANETGTAFISAGHHATERYGVRALAESAAEVFGLEVCHFDENNPA.

Residues His64, His65, Asp102, His217, and Glu221 each coordinate a divalent metal cation.

It belongs to the GTP cyclohydrolase I type 2/NIF3 family. As to quaternary structure, homohexamer.

This Neisseria meningitidis serogroup B (strain ATCC BAA-335 / MC58) protein is GTP cyclohydrolase 1 type 2 homolog.